The chain runs to 132 residues: Transcription antitermination protein NusB (132 aa).

This sequence belongs to the NusB family.

Involved in transcription antitermination. Required for transcription of ribosomal RNA (rRNA) genes. Binds specifically to the boxA antiterminator sequence of the ribosomal RNA (rrn) operons. The chain is Transcription antitermination protein NusB from Sulfurimonas denitrificans (strain ATCC 33889 / DSM 1251) (Thiomicrospira denitrificans (strain ATCC 33889 / DSM 1251)).